We begin with the raw amino-acid sequence, 419 residues long: eIF5-mimic protein 2 (419 aa).

Residue M1 is modified to N-acetylmethionine. Over residues 1–15 (MNNQKQQKPTLSGQR) the composition is skewed to polar residues. The tract at residues 1-26 (MNNQKQQKPTLSGQRFKTRKRDEKER) is disordered. S12 is subject to Phosphoserine. Residues 247–414 (NQQTIGARKE…KNAEEESESE (168 aa)) form the W2 domain. K368 is covalently cross-linked (Glycyl lysine isopeptide (Lys-Gly) (interchain with G-Cter in SUMO2)). S411 and S413 each carry phosphoserine.

Belongs to the BZW family.

Its function is as follows. Translation initiation regulator which represses repeat-associated non-AUG (RAN) initiated translation probably by acting as a competitive inhibitor of eukaryotic translation initiation factor 5 (EIF5) function. Enhances histone H4 gene transcription but does not seem to bind DNA directly. The polypeptide is eIF5-mimic protein 2 (BZW1) (Homo sapiens (Human)).